The following is a 542-amino-acid chain: CTP synthase (542 aa).

The segment at 1–265 (MTAFIFITGG…GRMLTELLKV (265 aa)) is amidoligase domain. CTP is bound at residue Ser-13. Ser-13 serves as a coordination point for UTP. 14 to 19 (SVGKGI) serves as a coordination point for ATP. Position 54 (Tyr-54) interacts with L-glutamine. Asp-71 lines the ATP pocket. The Mg(2+) site is built by Asp-71 and Glu-140. CTP-binding positions include 147–149 (DYE), 186–191 (KTKPLQ), and Lys-222. UTP-binding positions include 186–191 (KTKPLQ) and Lys-222. The region spanning 297-532 (YVKLRDAYIS…LKAALARKMG (236 aa)) is the Glutamine amidotransferase type-1 domain. Gly-352 is an L-glutamine binding site. The active-site Nucleophile; for glutamine hydrolysis is the Cys-379. Residues 380 to 383 (YGMQ), Glu-403, and Arg-460 each bind L-glutamine. Active-site residues include His-505 and Glu-507.

This sequence belongs to the CTP synthase family. Homotetramer.

The enzyme catalyses UTP + L-glutamine + ATP + H2O = CTP + L-glutamate + ADP + phosphate + 2 H(+). It carries out the reaction L-glutamine + H2O = L-glutamate + NH4(+). It catalyses the reaction UTP + NH4(+) + ATP = CTP + ADP + phosphate + 2 H(+). It participates in pyrimidine metabolism; CTP biosynthesis via de novo pathway; CTP from UDP: step 2/2. Allosterically activated by GTP, when glutamine is the substrate; GTP has no effect on the reaction when ammonia is the substrate. The allosteric effector GTP functions by stabilizing the protein conformation that binds the tetrahedral intermediate(s) formed during glutamine hydrolysis. Inhibited by the product CTP, via allosteric rather than competitive inhibition. Catalyzes the ATP-dependent amination of UTP to CTP with either L-glutamine or ammonia as the source of nitrogen. Regulates intracellular CTP levels through interactions with the four ribonucleotide triphosphates. The chain is CTP synthase from Caldivirga maquilingensis (strain ATCC 700844 / DSM 13496 / JCM 10307 / IC-167).